We begin with the raw amino-acid sequence, 505 residues long: Zinc finger protein 649 (505 aa).

Residues 8–79 form the KRAB domain; the sequence is LTLEDVAVDF…EDEIHSPAHP (72 aa). A Glycyl lysine isopeptide (Lys-Gly) (interchain with G-Cter in SUMO2) cross-link involves residue Lys-112. C2H2-type zinc fingers lie at residues 178–200, 206–228, 234–256, 262–284, 290–312, 318–340, 346–368, 374–396, 402–424, and 430–452; these read HECT…KRIH, HVCS…ERAH, HGCS…ERAH, YGCS…QRIH, HQCS…QRTH, HTCS…QRTH, YGCI…QRYH, FVCP…QKIH, YKCS…HRTH, and YGCD…KRIH. The tract at residues 455–481 is disordered; sequence EKRGDSVKVENPSTASHSLSPSEHVQG. Positions 465 to 477 are enriched in polar residues; sequence NPSTASHSLSPSE.

This sequence belongs to the krueppel C2H2-type zinc-finger protein family. As to expression, highly expressed in heart, skeletal muscle, and brain. Lower expression in liver, lung, kidney, pancreas and placenta.

The protein resides in the nucleus. Transcriptional repressor. Regulator of transcriptional factor complexes and may suppress SRE and AP-1 transcription activities mediated by growth factor signaling pathways. The polypeptide is Zinc finger protein 649 (ZNF649) (Homo sapiens (Human)).